Here is a 365-residue protein sequence, read N- to C-terminus: Cobalt-precorrin-5B C(1)-methyltransferase (365 aa).

Belongs to the CbiD family.

It carries out the reaction Co-precorrin-5B + S-adenosyl-L-methionine = Co-precorrin-6A + S-adenosyl-L-homocysteine. It functions in the pathway cofactor biosynthesis; adenosylcobalamin biosynthesis; cob(II)yrinate a,c-diamide from sirohydrochlorin (anaerobic route): step 6/10. Its function is as follows. Catalyzes the methylation of C-1 in cobalt-precorrin-5B to form cobalt-precorrin-6A. This is Cobalt-precorrin-5B C(1)-methyltransferase from Geobacillus sp. (strain WCH70).